Reading from the N-terminus, the 739-residue chain is Phosphoribosylformylglycinamidine synthase subunit PurL (739 aa).

Residue H54 is part of the active site. ATP-binding residues include Y57 and K96. Position 98 (E98) interacts with Mg(2+). Substrate-binding positions include 99 to 102 and R121; that span reads SHNH. H100 serves as the catalytic Proton acceptor. A Mg(2+)-binding site is contributed by D122. Q245 is a substrate binding site. D273 is a Mg(2+) binding site. Substrate is bound at residue 317–319; the sequence is ESQ. Positions 500 and 537 each coordinate ATP. N538 contacts Mg(2+). Residue S540 coordinates substrate.

This sequence belongs to the FGAMS family. Monomer. Part of the FGAM synthase complex composed of 1 PurL, 1 PurQ and 2 PurS subunits.

It localises to the cytoplasm. It catalyses the reaction N(2)-formyl-N(1)-(5-phospho-beta-D-ribosyl)glycinamide + L-glutamine + ATP + H2O = 2-formamido-N(1)-(5-O-phospho-beta-D-ribosyl)acetamidine + L-glutamate + ADP + phosphate + H(+). The protein operates within purine metabolism; IMP biosynthesis via de novo pathway; 5-amino-1-(5-phospho-D-ribosyl)imidazole from N(2)-formyl-N(1)-(5-phospho-D-ribosyl)glycinamide: step 1/2. In terms of biological role, part of the phosphoribosylformylglycinamidine synthase complex involved in the purines biosynthetic pathway. Catalyzes the ATP-dependent conversion of formylglycinamide ribonucleotide (FGAR) and glutamine to yield formylglycinamidine ribonucleotide (FGAM) and glutamate. The FGAM synthase complex is composed of three subunits. PurQ produces an ammonia molecule by converting glutamine to glutamate. PurL transfers the ammonia molecule to FGAR to form FGAM in an ATP-dependent manner. PurS interacts with PurQ and PurL and is thought to assist in the transfer of the ammonia molecule from PurQ to PurL. The protein is Phosphoribosylformylglycinamidine synthase subunit PurL of Bacillus anthracis (strain A0248).